We begin with the raw amino-acid sequence, 71 residues long: DNA-directed RNA polymerase subunit epsilon (71 aa).

The protein belongs to the RNA polymerase subunit epsilon family. As to quaternary structure, RNAP is composed of a core of 2 alpha, a beta and a beta' subunit. The core is associated with a delta subunit, and at least one of epsilon or omega. When a sigma factor is associated with the core the holoenzyme is formed, which can initiate transcription.

It catalyses the reaction RNA(n) + a ribonucleoside 5'-triphosphate = RNA(n+1) + diphosphate. Functionally, a non-essential component of RNA polymerase (RNAP). This Staphylococcus carnosus (strain TM300) protein is DNA-directed RNA polymerase subunit epsilon.